A 472-amino-acid polypeptide reads, in one-letter code: Adenosylhomocysteinase (472 aa).

Substrate contacts are provided by Thr-61, Asp-136, and Glu-196. Position 197–199 (197–199 (TTT)) interacts with NAD(+). Residues Lys-226 and Asp-230 each coordinate substrate. NAD(+) contacts are provided by residues Asn-231, 260–265 (GYGDVG), Glu-283, Asn-318, 339–341 (IGH), and Asn-384.

Belongs to the adenosylhomocysteinase family. NAD(+) is required as a cofactor.

The protein resides in the cytoplasm. It carries out the reaction S-adenosyl-L-homocysteine + H2O = L-homocysteine + adenosine. It functions in the pathway amino-acid biosynthesis; L-homocysteine biosynthesis; L-homocysteine from S-adenosyl-L-homocysteine: step 1/1. Functionally, may play a key role in the regulation of the intracellular concentration of adenosylhomocysteine. This Cupriavidus metallidurans (strain ATCC 43123 / DSM 2839 / NBRC 102507 / CH34) (Ralstonia metallidurans) protein is Adenosylhomocysteinase.